We begin with the raw amino-acid sequence, 388 residues long: tRNA-specific 2-thiouridylase MnmA (388 aa).

ATP contacts are provided by residues 26–33 (GLSGGVDS) and Leu52. Residue Cys113 is the Nucleophile of the active site. Residues Cys113 and Cys223 are joined by a disulfide bond. ATP is bound at residue Gly138. The tract at residues 173 to 175 (KDQ) is interaction with tRNA. Residue Cys223 is the Cysteine persulfide intermediate of the active site. The segment at 328–329 (RY) is interaction with tRNA.

Belongs to the MnmA/TRMU family.

The protein localises to the cytoplasm. The catalysed reaction is S-sulfanyl-L-cysteinyl-[protein] + uridine(34) in tRNA + AH2 + ATP = 2-thiouridine(34) in tRNA + L-cysteinyl-[protein] + A + AMP + diphosphate + H(+). Catalyzes the 2-thiolation of uridine at the wobble position (U34) of tRNA, leading to the formation of s(2)U34. In Prochlorococcus marinus (strain NATL2A), this protein is tRNA-specific 2-thiouridylase MnmA.